A 212-amino-acid polypeptide reads, in one-letter code: Thiamine-phosphate synthase (212 aa).

4-amino-2-methyl-5-(diphosphooxymethyl)pyrimidine contacts are provided by residues 39-41 (QLR) and N71. The Mg(2+) site is built by D72 and D91. Residue S110 coordinates 4-amino-2-methyl-5-(diphosphooxymethyl)pyrimidine. 2-[(2R,5Z)-2-carboxy-4-methylthiazol-5(2H)-ylidene]ethyl phosphate is bound at residue 136–138 (TGT). A 4-amino-2-methyl-5-(diphosphooxymethyl)pyrimidine-binding site is contributed by K139. Residues G167 and 187 to 188 (VS) contribute to the 2-[(2R,5Z)-2-carboxy-4-methylthiazol-5(2H)-ylidene]ethyl phosphate site.

The protein belongs to the thiamine-phosphate synthase family. Requires Mg(2+) as cofactor.

The enzyme catalyses 2-[(2R,5Z)-2-carboxy-4-methylthiazol-5(2H)-ylidene]ethyl phosphate + 4-amino-2-methyl-5-(diphosphooxymethyl)pyrimidine + 2 H(+) = thiamine phosphate + CO2 + diphosphate. It catalyses the reaction 2-(2-carboxy-4-methylthiazol-5-yl)ethyl phosphate + 4-amino-2-methyl-5-(diphosphooxymethyl)pyrimidine + 2 H(+) = thiamine phosphate + CO2 + diphosphate. The catalysed reaction is 4-methyl-5-(2-phosphooxyethyl)-thiazole + 4-amino-2-methyl-5-(diphosphooxymethyl)pyrimidine + H(+) = thiamine phosphate + diphosphate. The protein operates within cofactor biosynthesis; thiamine diphosphate biosynthesis; thiamine phosphate from 4-amino-2-methyl-5-diphosphomethylpyrimidine and 4-methyl-5-(2-phosphoethyl)-thiazole: step 1/1. Condenses 4-methyl-5-(beta-hydroxyethyl)thiazole monophosphate (THZ-P) and 2-methyl-4-amino-5-hydroxymethyl pyrimidine pyrophosphate (HMP-PP) to form thiamine monophosphate (TMP). The polypeptide is Thiamine-phosphate synthase (Azorhizobium caulinodans (strain ATCC 43989 / DSM 5975 / JCM 20966 / LMG 6465 / NBRC 14845 / NCIMB 13405 / ORS 571)).